The sequence spans 288 residues: Glutamate racemase (288 aa).

Residues 10–11 (DS) and 42–43 (YG) each bind substrate. The Proton donor/acceptor role is filled by C73. A substrate-binding site is contributed by 74–75 (NT). The Proton donor/acceptor role is filled by C184. Position 185 to 186 (185 to 186 (TH)) interacts with substrate.

This sequence belongs to the aspartate/glutamate racemases family.

The catalysed reaction is L-glutamate = D-glutamate. The protein operates within cell wall biogenesis; peptidoglycan biosynthesis. Provides the (R)-glutamate required for cell wall biosynthesis. This chain is Glutamate racemase, found in Corynebacterium kroppenstedtii (strain DSM 44385 / JCM 11950 / CIP 105744 / CCUG 35717).